The sequence spans 344 residues: tRNA N6-adenosine threonylcarbamoyltransferase (344 aa).

H110 and H114 together coordinate Fe cation. Substrate is bound by residues 133 to 137 (AVSGA), D166, G179, and N278. D303 serves as a coordination point for Fe cation.

This sequence belongs to the KAE1 / TsaD family. Fe(2+) is required as a cofactor.

The protein localises to the cytoplasm. The enzyme catalyses L-threonylcarbamoyladenylate + adenosine(37) in tRNA = N(6)-L-threonylcarbamoyladenosine(37) in tRNA + AMP + H(+). In terms of biological role, required for the formation of a threonylcarbamoyl group on adenosine at position 37 (t(6)A37) in tRNAs that read codons beginning with adenine. Is involved in the transfer of the threonylcarbamoyl moiety of threonylcarbamoyl-AMP (TC-AMP) to the N6 group of A37, together with TsaE and TsaB. TsaD likely plays a direct catalytic role in this reaction. The protein is tRNA N6-adenosine threonylcarbamoyltransferase of Chlamydia caviae (strain ATCC VR-813 / DSM 19441 / 03DC25 / GPIC) (Chlamydophila caviae).